Here is a 116-residue protein sequence, read N- to C-terminus: Large ribosomal subunit protein uL18 (116 aa).

Belongs to the universal ribosomal protein uL18 family. As to quaternary structure, part of the 50S ribosomal subunit; part of the 5S rRNA/L5/L18/L25 subcomplex. Contacts the 5S and 23S rRNAs.

Its function is as follows. This is one of the proteins that bind and probably mediate the attachment of the 5S RNA into the large ribosomal subunit, where it forms part of the central protuberance. This is Large ribosomal subunit protein uL18 from Alcanivorax borkumensis (strain ATCC 700651 / DSM 11573 / NCIMB 13689 / SK2).